We begin with the raw amino-acid sequence, 433 residues long: Ribosomal RNA small subunit methyltransferase B (433 aa).

Residues 254-260 (CAAPGGK), Asp-277, Asp-303, and Asp-322 each bind S-adenosyl-L-methionine. Cys-375 (nucleophile) is an active-site residue.

Belongs to the class I-like SAM-binding methyltransferase superfamily. RsmB/NOP family.

Its subcellular location is the cytoplasm. The enzyme catalyses cytidine(967) in 16S rRNA + S-adenosyl-L-methionine = 5-methylcytidine(967) in 16S rRNA + S-adenosyl-L-homocysteine + H(+). Its function is as follows. Specifically methylates the cytosine at position 967 (m5C967) of 16S rRNA. This chain is Ribosomal RNA small subunit methyltransferase B, found in Sodalis glossinidius (strain morsitans).